The chain runs to 974 residues: Exocyst complex component 4 (974 aa).

At A2 the chain carries N-acetylalanine. Residue K9 is modified to N6-acetyllysine. 2 positions are modified to phosphoserine: S32 and S226. The stretch at S32 to L114 forms a coiled coil. A phosphothreonine mark is found at T233 and T237. S468 is modified (phosphoserine).

Belongs to the SEC8 family. The exocyst complex is composed of EXOC1, EXOC2, EXOC3, EXOC4, EXOC5, EXOC6, EXOC7 and EXOC8. Interacts with BIRC6/bruce. Interacts with MYRIP. Interacts with SH3BP1; required for the localization of both SH3BP1 and the exocyst to the leading edge of migrating cells. Interacts with SLC6A9.

It is found in the midbody. The protein localises to the midbody ring. Its subcellular location is the cell projection. The protein resides in the cytoplasm. It localises to the cytoskeleton. It is found in the microtubule organizing center. The protein localises to the centrosome. Its function is as follows. Component of the exocyst complex involved in the docking of exocytic vesicles with fusion sites on the plasma membrane. This is Exocyst complex component 4 (EXOC4) from Homo sapiens (Human).